The primary structure comprises 185 residues: Elongation factor P (185 aa).

The protein belongs to the elongation factor P family.

The protein localises to the cytoplasm. It participates in protein biosynthesis; polypeptide chain elongation. Functionally, involved in peptide bond synthesis. Stimulates efficient translation and peptide-bond synthesis on native or reconstituted 70S ribosomes in vitro. Probably functions indirectly by altering the affinity of the ribosome for aminoacyl-tRNA, thus increasing their reactivity as acceptors for peptidyl transferase. The chain is Elongation factor P from Agathobacter rectalis (strain ATCC 33656 / DSM 3377 / JCM 17463 / KCTC 5835 / VPI 0990) (Eubacterium rectale).